The following is a 775-amino-acid chain: Beta-galactosidase 7 (775 aa).

A signal peptide spans 1–17; sequence MRGGMAITAALVVVAAA. E185 functions as the Proton donor in the catalytic mechanism. E256 serves as the catalytic Nucleophile. Residues N257, N266, N277, N358, and N602 are each glycosylated (N-linked (GlcNAc...) asparagine). An SUEL-type lectin domain is found at 689–775; sequence RGKVPKVRIW…KSLLVVADCR (87 aa).

The protein belongs to the glycosyl hydrolase 35 family.

Its subcellular location is the secreted. The protein localises to the extracellular space. It is found in the apoplast. The enzyme catalyses Hydrolysis of terminal non-reducing beta-D-galactose residues in beta-D-galactosides.. The protein is Beta-galactosidase 7 of Oryza sativa subsp. japonica (Rice).